Reading from the N-terminus, the 1648-residue chain is Histone transcription regulator 3 (1648 aa).

Disordered regions lie at residues 301 to 371 (NTPS…EQEN) and 1597 to 1630 (DVND…IKKR). Threonine 302 carries the phosphothreonine modification. Serine 304 carries the post-translational modification Phosphoserine. The segment covering 339–353 (EEARPNKRTDEHIDS) has biased composition (basic and acidic residues). The span at 1597-1610 (DVNDENNPALPSSG) shows a compositional bias: polar residues. Residues 1611–1625 (SVTSKSTPDPTSKPS) are compositionally biased toward low complexity.

The protein belongs to the HIR3 family. Component of the HIR complex, composed of HIR1, HIR2, HIR3 and HPC2. This complex may consist of one copy of HIR1 and HIR3 and two copies of HIR2 and HPC2. The HIR complex interacts with ASF1. Interacts with RTT106.

It localises to the nucleus. The protein localises to the chromosome. HIR1, HIR2 and HIR3 are repressors of histone gene transcription. They are required for the periodic repression of three of the four histone gene loci during cell cycle as well as for autogenous regulation of the HTA1-HTB1 locus by H2A and H2B. Also has a role in nucleosome assembly. The sequence is that of Histone transcription regulator 3 (HIR3) from Saccharomyces cerevisiae (strain ATCC 204508 / S288c) (Baker's yeast).